The primary structure comprises 268 residues: NH(3)-dependent NAD(+) synthetase (268 aa).

46–53 (GVSGGQDS) is an ATP binding site. D52 serves as a coordination point for Mg(2+). R140 lines the deamido-NAD(+) pocket. An ATP-binding site is contributed by T160. E165 contributes to the Mg(2+) binding site. 2 residues coordinate deamido-NAD(+): K173 and D180. An ATP-binding site is contributed by K189. 260 to 261 (HK) is a deamido-NAD(+) binding site.

It belongs to the NAD synthetase family. As to quaternary structure, homodimer.

The enzyme catalyses deamido-NAD(+) + NH4(+) + ATP = AMP + diphosphate + NAD(+) + H(+). It participates in cofactor biosynthesis; NAD(+) biosynthesis; NAD(+) from deamido-NAD(+) (ammonia route): step 1/1. Catalyzes the ATP-dependent amidation of deamido-NAD to form NAD. Uses ammonia as a nitrogen source. This chain is NH(3)-dependent NAD(+) synthetase, found in Buchnera aphidicola subsp. Acyrthosiphon pisum (strain Tuc7).